The sequence spans 187 residues: Troponin I, slow skeletal muscle (187 aa).

Pro-2 bears the N-acetylproline mark. Residues 2–48 (PEVERKPKITASRKLLLKSLMLAKAKECWEQEHEEREAEKVRYLAER) form an involved in binding TNC region. The residue at position 58 (Ser-58) is a Phosphoserine. The tract at residues 97-118 (LKLKVMDLRGKFKRPPLRRVRV) is involved in binding TNC and actin.

Belongs to the troponin I family. In terms of assembly, binds to actin and tropomyosin. In terms of tissue distribution, highest levels observed in human skeletal muscle (e.g. gastrocnemious muscle), differentiated cultures of primary human muscle cells and rhabdomyosarcoma cells cultured in low serum medium. Expressed in C2 muscle cell myoblasts and myotubes.

In terms of biological role, troponin I is the inhibitory subunit of troponin, the thin filament regulatory complex which confers calcium-sensitivity to striated muscle actomyosin ATPase activity. This is Troponin I, slow skeletal muscle (TNNI1) from Homo sapiens (Human).